We begin with the raw amino-acid sequence, 217 residues long: Protein 33K (217 aa).

Residues 1–142 are disordered; it reads MPPKGNKQAI…KEKTSAIATR (142 aa). The segment covering 24–68 has biased composition (acidic residues); it reads QWDEEEESWDDSQAEEVSDEEEMESWESLDEELEDKPPKDEEEEI. Low complexity predominate over residues 69–78; it reads IASAAAPSSK. Basic and acidic residues predominate over residues 123–136; the sequence is KRSEKTTRPRKEKT. The segment at 160-187 is necessary for nuclear subcellular location; it reads YAIFQQSRGQQLELKVKNRSLRSLTRSC. The RS-repeat; required for splicing enhancer activity stretch occupies residues 166 to 186; sequence SRGQQLELKVKNRSLRSLTRS.

This sequence belongs to the adenoviridae splicing factor family. In terms of assembly, homooligomer. Interacts with DBP; this interaction occurs at a unique vertex during genome packaging. Interacts with IVa2; this interaction occurs at a unique vertex during genome packaging and seems to potentiate IVa2 and 33K oligomerization. In terms of processing, phosphorylated in vitro by human PKA and PRKDC. PRKDC inhibits, whereas PKA activates the splicing factor.

The protein localises to the host nucleus. Functionally, promotes alternative splicing of late transcripts by promoting splicing at weak 3' splice sites. Required for the temporal activation of major late pre-mRNA splicing at late times of infection. Induces the splicing and expression of the late capsid vertex protein. Its function is as follows. Probably functions as the small terminase that is part of the molecular motor that translocates genomic DNA in empty capsid during DNA packaging. This motor is located at a unique vertex and comprises at least the IVa2 ATPase, the small terminase 33K and probably a portal. Forms a ring-like structure of about 17 nm in which genomic DNA is translocated into the capsid. Stimulates IVa2 ATPase activity in the presence of the viral genome. Once the DNA is packaged, the terminase detaches: the 33K protein is present in the empty particles, but not in the mature virions. Also involved in virion assembly. The chain is Protein 33K from Human adenovirus F serotype 41 (HAdV-41).